The following is a 410-amino-acid chain: Peptidase T (410 aa).

His79 is a binding site for Zn(2+). The active site involves Asp81. Asp142 lines the Zn(2+) pocket. Residue Glu176 is the Proton acceptor of the active site. Glu177, Asp199, and His381 together coordinate Zn(2+).

Belongs to the peptidase M20B family. Zn(2+) is required as a cofactor.

It is found in the cytoplasm. It carries out the reaction Release of the N-terminal residue from a tripeptide.. Cleaves the N-terminal amino acid of tripeptides. The sequence is that of Peptidase T from Bacillus licheniformis (strain ATCC 14580 / DSM 13 / JCM 2505 / CCUG 7422 / NBRC 12200 / NCIMB 9375 / NCTC 10341 / NRRL NRS-1264 / Gibson 46).